The chain runs to 521 residues: Cholesterol side-chain cleavage enzyme, mitochondrial (521 aa).

Residues 1–39 constitute a mitochondrion transit peptide; the sequence is MLAKGLPPRSVLVKGCQTFLSAPKERLGHLRVPTSEGAG. Residue Cys462 participates in heme binding.

It belongs to the cytochrome P450 family. Interacts with FDX1/adrenodoxin. Heme is required as a cofactor.

Its subcellular location is the mitochondrion inner membrane. It carries out the reaction 6 reduced [adrenodoxin] + cholesterol + 3 O2 + 6 H(+) = 4-methylpentanal + pregnenolone + 6 oxidized [adrenodoxin] + 4 H2O. It catalyses the reaction 2 reduced [adrenodoxin] + cholesterol + O2 + 2 H(+) = (22R)-hydroxycholesterol + 2 oxidized [adrenodoxin] + H2O. The enzyme catalyses (22R)-hydroxycholesterol + 2 reduced [adrenodoxin] + O2 + 2 H(+) = (20R,22R)-20,22-dihydroxycholesterol + 2 oxidized [adrenodoxin] + H2O. The catalysed reaction is (20R,22R)-20,22-dihydroxycholesterol + 2 reduced [adrenodoxin] + O2 + 2 H(+) = 4-methylpentanal + pregnenolone + 2 oxidized [adrenodoxin] + 2 H2O. Its pathway is lipid metabolism; C21-steroid hormone metabolism. It functions in the pathway steroid metabolism; cholesterol metabolism. Functionally, a cytochrome P450 monooxygenase that catalyzes the side-chain hydroxylation and cleavage of cholesterol to pregnenolone, the precursor of most steroid hormones. Catalyzes three sequential oxidation reactions of cholesterol, namely the hydroxylation at C22 followed with the hydroxylation at C20 to yield 20R,22R-hydroxycholesterol that is further cleaved between C20 and C22 to yield the C21-steroid pregnenolone and 4-methylpentanal. Mechanistically, uses molecular oxygen inserting one oxygen atom into a substrate and reducing the second into a water molecule. Two electrons are provided by NADPH via a two-protein mitochondrial transfer system comprising flavoprotein FDXR (adrenodoxin/ferredoxin reductase) and nonheme iron-sulfur protein FDX1 or FDX2 (adrenodoxin/ferredoxin). This Macaca fascicularis (Crab-eating macaque) protein is Cholesterol side-chain cleavage enzyme, mitochondrial (CYP11A1).